Here is a 431-residue protein sequence, read N- to C-terminus: Enolase (431 aa).

Gln-166 serves as a coordination point for (2R)-2-phosphoglycerate. The active-site Proton donor is the Glu-208. Asp-245, Glu-288, and Asp-315 together coordinate Mg(2+). The (2R)-2-phosphoglycerate site is built by Lys-340, Arg-369, Ser-370, and Lys-391. Lys-340 (proton acceptor) is an active-site residue.

Belongs to the enolase family. The cofactor is Mg(2+).

The protein resides in the cytoplasm. Its subcellular location is the secreted. The protein localises to the cell surface. The catalysed reaction is (2R)-2-phosphoglycerate = phosphoenolpyruvate + H2O. It participates in carbohydrate degradation; glycolysis; pyruvate from D-glyceraldehyde 3-phosphate: step 4/5. Its function is as follows. Catalyzes the reversible conversion of 2-phosphoglycerate (2-PG) into phosphoenolpyruvate (PEP). It is essential for the degradation of carbohydrates via glycolysis. This chain is Enolase, found in Clostridium perfringens (strain ATCC 13124 / DSM 756 / JCM 1290 / NCIMB 6125 / NCTC 8237 / Type A).